Reading from the N-terminus, the 492-residue chain is Probable malate:quinone oxidoreductase 1 (492 aa).

The protein belongs to the MQO family. The cofactor is FAD.

The catalysed reaction is (S)-malate + a quinone = a quinol + oxaloacetate. It participates in carbohydrate metabolism; tricarboxylic acid cycle; oxaloacetate from (S)-malate (quinone route): step 1/1. This is Probable malate:quinone oxidoreductase 1 from Staphylococcus epidermidis (strain ATCC 12228 / FDA PCI 1200).